The primary structure comprises 154 residues: Crossover junction endodeoxyribonuclease RuvC (154 aa).

Active-site residues include Asp-7, Glu-67, and Asp-139. Residues Asp-7, Glu-67, and Asp-139 each contribute to the Mg(2+) site.

It belongs to the RuvC family. Homodimer which binds Holliday junction (HJ) DNA. The HJ becomes 2-fold symmetrical on binding to RuvC with unstacked arms; it has a different conformation from HJ DNA in complex with RuvA. In the full resolvosome a probable DNA-RuvA(4)-RuvB(12)-RuvC(2) complex forms which resolves the HJ. Requires Mg(2+) as cofactor.

Its subcellular location is the cytoplasm. The enzyme catalyses Endonucleolytic cleavage at a junction such as a reciprocal single-stranded crossover between two homologous DNA duplexes (Holliday junction).. Functionally, the RuvA-RuvB-RuvC complex processes Holliday junction (HJ) DNA during genetic recombination and DNA repair. Endonuclease that resolves HJ intermediates. Cleaves cruciform DNA by making single-stranded nicks across the HJ at symmetrical positions within the homologous arms, yielding a 5'-phosphate and a 3'-hydroxyl group; requires a central core of homology in the junction. The consensus cleavage sequence is 5'-(A/T)TT(C/G)-3'. Cleavage occurs on the 3'-side of the TT dinucleotide at the point of strand exchange. HJ branch migration catalyzed by RuvA-RuvB allows RuvC to scan DNA until it finds its consensus sequence, where it cleaves and resolves the cruciform DNA. The protein is Crossover junction endodeoxyribonuclease RuvC of Prochlorococcus marinus (strain NATL2A).